The following is a 39-amino-acid chain: MELLAALNLEPIFQLTFVGLIVIAGPIVIAVLAFRGGDL.

The helical transmembrane segment at 12 to 32 (IFQLTFVGLIVIAGPIVIAVL) threads the bilayer.

It belongs to the Psb30/Ycf12 family. PSII is composed of 1 copy each of membrane proteins PsbA, PsbB, PsbC, PsbD, PsbE, PsbF, PsbH, PsbI, PsbJ, PsbK, PsbL, PsbM, PsbT, PsbX, PsbY, PsbZ, Psb30/Ycf12, peripheral proteins PsbO, CyanoQ (PsbQ), PsbU, PsbV and a large number of cofactors. It forms dimeric complexes.

It is found in the cellular thylakoid membrane. In terms of biological role, a core subunit of photosystem II (PSII), probably helps stabilize the reaction center. In Crocosphaera subtropica (strain ATCC 51142 / BH68) (Cyanothece sp. (strain ATCC 51142)), this protein is Photosystem II reaction center protein Psb30.